The chain runs to 79 residues: Acyl carrier protein (79 aa).

The Carrier domain occupies 2–77; the sequence is ENIEQRVKKI…QAIDYVTAHL (76 aa). Ser-37 is modified (O-(pantetheine 4'-phosphoryl)serine).

This sequence belongs to the acyl carrier protein (ACP) family. In terms of processing, 4'-phosphopantetheine is transferred from CoA to a specific serine of apo-ACP by AcpS. This modification is essential for activity because fatty acids are bound in thioester linkage to the sulfhydryl of the prosthetic group.

The protein resides in the cytoplasm. It participates in lipid metabolism; fatty acid biosynthesis. Its function is as follows. Carrier of the growing fatty acid chain in fatty acid biosynthesis. This Aromatoleum aromaticum (strain DSM 19018 / LMG 30748 / EbN1) (Azoarcus sp. (strain EbN1)) protein is Acyl carrier protein.